Reading from the N-terminus, the 598-residue chain is Elongation factor 4 (598 aa).

Positions 4 to 181 (KKIRNFAIIA…AIVNLIPPPQ (178 aa)) constitute a tr-type G domain. GTP-binding positions include 16–21 (DHGKST) and 128–131 (NKID).

The protein belongs to the TRAFAC class translation factor GTPase superfamily. Classic translation factor GTPase family. LepA subfamily.

It is found in the cell membrane. It carries out the reaction GTP + H2O = GDP + phosphate + H(+). Required for accurate and efficient protein synthesis under certain stress conditions. May act as a fidelity factor of the translation reaction, by catalyzing a one-codon backward translocation of tRNAs on improperly translocated ribosomes. Back-translocation proceeds from a post-translocation (POST) complex to a pre-translocation (PRE) complex, thus giving elongation factor G a second chance to translocate the tRNAs correctly. Binds to ribosomes in a GTP-dependent manner. This chain is Elongation factor 4, found in Mesomycoplasma hyopneumoniae (strain J / ATCC 25934 / NCTC 10110) (Mycoplasma hyopneumoniae).